A 239-amino-acid chain; its full sequence is Ribose-5-phosphate isomerase A (239 aa).

Substrate contacts are provided by residues 31-34 (FGST), 88-91 (DGAD), and 101-104 (KGGG). Glutamate 110 serves as the catalytic Proton acceptor. Lysine 128 contributes to the substrate binding site.

This sequence belongs to the ribose 5-phosphate isomerase family. As to quaternary structure, homodimer.

It carries out the reaction aldehydo-D-ribose 5-phosphate = D-ribulose 5-phosphate. Its pathway is carbohydrate degradation; pentose phosphate pathway; D-ribose 5-phosphate from D-ribulose 5-phosphate (non-oxidative stage): step 1/1. Functionally, catalyzes the reversible conversion of ribose-5-phosphate to ribulose 5-phosphate. In Chloroflexus aurantiacus (strain ATCC 29366 / DSM 635 / J-10-fl), this protein is Ribose-5-phosphate isomerase A.